The chain runs to 655 residues: Endoplasmic reticulum chaperone BiP (655 aa).

The signal sequence occupies residues 1–19 (MMKFTVVAAALLLLGAVRA). The required for interaction with ELAPOR1 stretch occupies residues 1 to 81 (MMKFTVVAAA…EGERLIGDAA (81 aa)). 37–40 (GTTY) is a binding site for ATP. Ser87 carries the phosphoserine modification. Lys97 contributes to the ATP binding site. Lys126 carries the post-translational modification N6-acetyllysine. The tract at residues 126 to 281 (KPYIQVDIGG…KKKTGKDVRK (156 aa)) is nucleotide-binding (NBD). 3'-nitrotyrosine is present on Tyr161. Lys214 is modified (N6-acetyllysine). 228 to 230 (GGT) serves as a coordination point for ATP. At Lys272 the chain carries N6-acetyllysine. 294 to 301 (EKAKRALS) is an ATP binding site. An N6-acetyllysine modification is found at Lys327. A Glycyl lysine isopeptide (Lys-Gly) (interchain with G-Cter in SUMO2) cross-link involves residue Lys353. At Lys354 the chain carries N6-acetyllysine; alternate. Residue Lys354 forms a Glycyl lysine isopeptide (Lys-Gly) (interchain with G-Cter in SUMO1); alternate linkage. Residue 365–368 (GSTR) participates in ATP binding. Residues 410-420 (QDTGDLVLLDV) form an interdomain linker region. Positions 421-501 (CPLTLGIETV…PRGVPQIEVT (81 aa)) are substrate-binding (SBD). An N6-succinyllysine modification is found at Lys448. Arg493 is subject to Omega-N-methylarginine. At Thr519 the chain carries O-AMP-threonine; alternate. Thr519 is subject to Phosphothreonine; alternate. The residue at position 586 (Lys586) is an N6,N6,N6-trimethyllysine; by METTL21A; in vitro. Lys586 is subject to N6,N6-dimethyllysine; alternate. Lys586 bears the N6-methyllysine; alternate mark. An N6-methyllysine modification is found at Lys592. Residues 632 to 655 (ISKLYGSGGPPPTGEEDTSEKDEL) form a disordered region. Phosphothreonine is present on residues Thr644 and Thr649. Over residues 645–655 (GEEDTSEKDEL) the composition is skewed to acidic residues. Ser650 bears the Phosphoserine mark. A Prevents secretion from ER motif is present at residues 652–655 (KDEL).

It belongs to the heat shock protein 70 family. In terms of assembly, monomer and homooligomer; homooligomerization via the interdomain linker inactivates the chaperone activity and acts as a storage of HSPA5/BiP molecules. Interacts with DNAJC1 (via J domain). Component of an EIF2 complex at least composed of CELF1/CUGBP1, CALR, CALR3, EIF2S1, EIF2S2, HSP90B1 and HSPA5. Part of a large chaperone multiprotein complex comprising DNAJB11, HSP90B1, HSPA5, HYOU, PDIA2, PDIA4, PDIA6, PPIB, SDF2L1, UGGT1 and very small amounts of ERP29, but not, or at very low levels, CALR nor CANX. Interacts with TMEM132A and TRIM21. May form a complex with ERLEC1, OS9, SEL1L and SYVN1. Interacts with DNAJC10. Interacts with DNAJB9/ERdj4; leading to recruit HSPA5/BiP to ERN1/IRE1. Interacts with ERN1/IRE1 (via luminal domain); the interaction takes place following interaction with DNAJB9/ERdj4 and leads to inactivate ERN1/IRE1, the interaction also competitively inhibits ERN1 interaction with MANF. Interacts directly with MANF (via SAP domain); the interaction inhibits ATP binding to HSPA5/BiP and subsequent nucleotide exchange. Interacts with ERN1 (via luminal domain); the interaction competitively inhibits ERN1 interaction with MANF. Interacts with EIF2AK3/PERK (via luminal domain); interaction leads to inactivate EIF2AK3/PERK. Interacts with MX1. Interacts with METTL23. Interacts with CEMIP; the interaction induces calcium leakage from the endoplasmic reticulum and cell migration. Interacts with PCSK4 form; the interaction takes place in the endoplasmic reticulum. Interacts with CIPC. Interacts with CCDC88B (via C-terminus); the interaction opposes ERN1-mediated JNK activation, protecting against apoptosis. Interacts with INPP5K; necessary for INPP5K localization at the endoplasmic reticulum. Interacts with MANF; the interaction is direct. Interacts with LOXL2; leading to activate the ERN1/IRE1-XBP1 pathway of the unfolded protein response. Interacts with CLU under stressed condition; interaction increases CLU protein stability; facilitates its retrotranslocation and redistribution to the mitochondria; cooperatively suppress stress-induced apoptosis by stabilizing mitochondrial membrane integrity. Interacts with CCDC47. Interacts with CLN3. Interacts with ELAPOR1; may regulate the function of HSPA5 in apoptosis and cell proliferation. Interacts with CASP7. Interacts with ILDR2; the interaction stabilizes ILDR2 expression. Interacts with ADAM7. Post-translationally, in unstressed cells, AMPylation at Thr-519 by FICD inactivates the chaperome activity: AMPylated form is locked in a relatively inert state and only weakly stimulated by J domain-containing proteins. In response to endoplasmic reticulum stress, de-AMPylation by the same protein, FICD, restores the chaperone activity. As to expression, expressed in sperm (at protein level).

Its subcellular location is the endoplasmic reticulum lumen. The protein localises to the melanosome. It localises to the cytoplasm. It is found in the cell surface. It catalyses the reaction ATP + H2O = ADP + phosphate + H(+). The chaperone activity is regulated by ATP-induced allosteric coupling of the nucleotide-binding (NBD) and substrate-binding (SBD) domains. In the ADP-bound and nucleotide-free (apo) states, the two domains have little interaction. In contrast, in the ATP-bound state the two domains are tightly coupled, which results in drastically accelerated kinetics in both binding and release of polypeptide substrates. J domain-containing co-chaperones (DNAJB9/ERdj4 or DNAJC10/ERdj5) stimulate the ATPase activity and are required for efficient substrate recognition by HSPA5/BiP. Homooligomerization inactivates participating HSPA5/BiP protomers and probably act as reservoirs to store HSPA5/BiP molecules when they are not needed by the cell. In terms of biological role, endoplasmic reticulum chaperone that plays a key role in protein folding and quality control in the endoplasmic reticulum lumen. Involved in the correct folding of proteins and degradation of misfolded proteins via its interaction with DNAJC10/ERdj5, probably to facilitate the release of DNAJC10/ERdj5 from its substrate. Acts as a key repressor of the EIF2AK3/PERK and ERN1/IRE1-mediated unfolded protein response (UPR). In the unstressed endoplasmic reticulum, recruited by DNAJB9/ERdj4 to the luminal region of ERN1/IRE1, leading to disrupt the dimerization of ERN1/IRE1, thereby inactivating ERN1/IRE1. Also binds and inactivates EIF2AK3/PERK in unstressed cells. Accumulation of misfolded protein in the endoplasmic reticulum causes release of HSPA5/BiP from ERN1/IRE1 and EIF2AK3/PERK, allowing their homodimerization and subsequent activation. Plays an auxiliary role in post-translational transport of small presecretory proteins across endoplasmic reticulum (ER). May function as an allosteric modulator for SEC61 channel-forming translocon complex, likely cooperating with SEC62 to enable the productive insertion of these precursors into SEC61 channel. Appears to specifically regulate translocation of precursors having inhibitory residues in their mature region that weaken channel gating. May also play a role in apoptosis and cell proliferation. This chain is Endoplasmic reticulum chaperone BiP, found in Mus musculus (Mouse).